The chain runs to 324 residues: NADH-ubiquinone oxidoreductase chain 1 (324 aa).

8 helical membrane passes run 9–29 (LINP…LTLI), 75–95 (FLFL…WAPM), 106–126 (LGIL…LGSG), 146–166 (ISYE…SGGY), 177–197 (SIWL…STLA), 228–248 (LFFL…AVLF), 259–279 (ELTT…FLWV), and 299–319 (FLPL…ALAG).

The protein belongs to the complex I subunit 1 family.

The protein resides in the mitochondrion inner membrane. The enzyme catalyses a ubiquinone + NADH + 5 H(+)(in) = a ubiquinol + NAD(+) + 4 H(+)(out). Core subunit of the mitochondrial membrane respiratory chain NADH dehydrogenase (Complex I) that is believed to belong to the minimal assembly required for catalysis. Complex I functions in the transfer of electrons from NADH to the respiratory chain. The immediate electron acceptor for the enzyme is believed to be ubiquinone. The chain is NADH-ubiquinone oxidoreductase chain 1 (MT-ND1) from Carassius auratus (Goldfish).